A 390-amino-acid chain; its full sequence is Protein AC109 (390 aa).

The protein resides in the host cytoplasm. The protein localises to the host nucleus. Its function is as follows. Plays a role in the transport of the budded virion (BV) to the host nucleus and for occlusion of viral progeny. This Lepidoptera (butterflies and moths) protein is Protein AC109 (ORF109).